Consider the following 141-residue polypeptide: Galactose-6-phosphate isomerase subunit LacA 1 (141 aa).

It belongs to the LacAB/RpiB family. As to quaternary structure, heteromultimeric protein consisting of LacA and LacB.

The enzyme catalyses aldehydo-D-galactose 6-phosphate = keto-D-tagatose 6-phosphate. Its pathway is carbohydrate metabolism; D-galactose 6-phosphate degradation; D-tagatose 6-phosphate from D-galactose 6-phosphate: step 1/1. This chain is Galactose-6-phosphate isomerase subunit LacA 1, found in Streptococcus pyogenes serotype M6 (strain ATCC BAA-946 / MGAS10394).